The primary structure comprises 255 residues: Glycerol-3-phosphate regulon repressor (255 aa).

The HTH deoR-type domain occupies 3–58 (QSLRHQKIIKLVEQSGYLSTEELVAALDVSPQTIRRDLNILAELDLIRRHHGGAAS). The H-T-H motif DNA-binding region spans 20-39 (LSTEELVAALDVSPQTIRRD).

In terms of biological role, repressor of the glycerol-3-phosphate regulon. This Haemophilus influenzae (strain ATCC 51907 / DSM 11121 / KW20 / Rd) protein is Glycerol-3-phosphate regulon repressor (glpR).